A 234-amino-acid polypeptide reads, in one-letter code: ATP-dependent dethiobiotin synthetase BioD (234 aa).

Position 12 to 17 (12 to 17 (DVGKTF)) interacts with ATP. A Mg(2+)-binding site is contributed by threonine 16. The active site involves lysine 37. Serine 41 is a substrate binding site. ATP-binding positions include aspartate 52, 118-121 (EGAG), and 178-179 (SQ). Mg(2+) contacts are provided by aspartate 52 and glutamate 118.

This sequence belongs to the dethiobiotin synthetase family. Homodimer. Mg(2+) is required as a cofactor.

The protein localises to the cytoplasm. It catalyses the reaction (7R,8S)-7,8-diammoniononanoate + CO2 + ATP = (4R,5S)-dethiobiotin + ADP + phosphate + 3 H(+). The protein operates within cofactor biosynthesis; biotin biosynthesis; biotin from 7,8-diaminononanoate: step 1/2. In terms of biological role, catalyzes a mechanistically unusual reaction, the ATP-dependent insertion of CO2 between the N7 and N8 nitrogen atoms of 7,8-diaminopelargonic acid (DAPA, also called 7,8-diammoniononanoate) to form a ureido ring. This chain is ATP-dependent dethiobiotin synthetase BioD, found in Phenylobacterium zucineum (strain HLK1).